Reading from the N-terminus, the 90-residue chain is uncharacterized protein (90 aa).

This is an uncharacterized protein from Treponema pallidum (strain Nichols).